Reading from the N-terminus, the 119-residue chain is Large ribosomal subunit protein bL20 (119 aa).

Belongs to the bacterial ribosomal protein bL20 family.

Binds directly to 23S ribosomal RNA and is necessary for the in vitro assembly process of the 50S ribosomal subunit. It is not involved in the protein synthesizing functions of that subunit. The polypeptide is Large ribosomal subunit protein bL20 (Xanthomonas campestris pv. campestris (strain 8004)).